A 148-amino-acid polypeptide reads, in one-letter code: Nucleoside diphosphate kinase (148 aa).

6 residues coordinate ATP: lysine 9, phenylalanine 57, arginine 85, threonine 91, arginine 102, and asparagine 112. Position 91 is a phosphothreonine (threonine 91). Histidine 115 (pros-phosphohistidine intermediate) is an active-site residue. Serine 122 bears the Phosphoserine mark.

The protein belongs to the NDK family. In terms of assembly, homotetramer. Requires Mg(2+) as cofactor.

It localises to the cytoplasm. It catalyses the reaction a 2'-deoxyribonucleoside 5'-diphosphate + ATP = a 2'-deoxyribonucleoside 5'-triphosphate + ADP. The catalysed reaction is a ribonucleoside 5'-diphosphate + ATP = a ribonucleoside 5'-triphosphate + ADP. Functionally, major role in the synthesis of nucleoside triphosphates other than ATP. The ATP gamma phosphate is transferred to the NDP beta phosphate via a ping-pong mechanism, using a phosphorylated active-site intermediate. The sequence is that of Nucleoside diphosphate kinase from Bacillus anthracis.